Consider the following 196-residue polypeptide: ATP-dependent Clp protease proteolytic subunit (196 aa).

Ser-96 serves as the catalytic Nucleophile. His-121 is a catalytic residue.

It belongs to the peptidase S14 family. Fourteen ClpP subunits assemble into 2 heptameric rings which stack back to back to give a disk-like structure with a central cavity, resembling the structure of eukaryotic proteasomes.

It localises to the cytoplasm. It catalyses the reaction Hydrolysis of proteins to small peptides in the presence of ATP and magnesium. alpha-casein is the usual test substrate. In the absence of ATP, only oligopeptides shorter than five residues are hydrolyzed (such as succinyl-Leu-Tyr-|-NHMec, and Leu-Tyr-Leu-|-Tyr-Trp, in which cleavage of the -Tyr-|-Leu- and -Tyr-|-Trp bonds also occurs).. Cleaves peptides in various proteins in a process that requires ATP hydrolysis. Has a chymotrypsin-like activity. Plays a major role in the degradation of misfolded proteins. This Streptococcus gordonii (strain Challis / ATCC 35105 / BCRC 15272 / CH1 / DL1 / V288) protein is ATP-dependent Clp protease proteolytic subunit.